Here is a 451-residue protein sequence, read N- to C-terminus: D-inositol 3-phosphate glycosyltransferase (451 aa).

Histidine 37 contributes to the 1D-myo-inositol 3-phosphate binding site. UDP-N-acetyl-alpha-D-glucosamine contacts are provided by residues 43–44 (QP) and glycine 51. 1D-myo-inositol 3-phosphate-binding positions include 48–53 (DAGGMN), lysine 106, tyrosine 138, threonine 162, and arginine 182. Residues arginine 259, lysine 264, and arginine 323 each coordinate UDP-N-acetyl-alpha-D-glucosamine. Residues tyrosine 332, arginine 333, and alanine 335 each coordinate Mg(2+). Residues glutamate 345 and glutamate 353 each coordinate UDP-N-acetyl-alpha-D-glucosamine. Residue threonine 359 participates in Mg(2+) binding.

Belongs to the glycosyltransferase group 1 family. MshA subfamily. Homodimer.

It catalyses the reaction 1D-myo-inositol 3-phosphate + UDP-N-acetyl-alpha-D-glucosamine = 1D-myo-inositol 2-acetamido-2-deoxy-alpha-D-glucopyranoside 3-phosphate + UDP + H(+). Functionally, catalyzes the transfer of a N-acetyl-glucosamine moiety to 1D-myo-inositol 3-phosphate to produce 1D-myo-inositol 2-acetamido-2-deoxy-glucopyranoside 3-phosphate in the mycothiol biosynthesis pathway. The polypeptide is D-inositol 3-phosphate glycosyltransferase (Corynebacterium kroppenstedtii (strain DSM 44385 / JCM 11950 / CIP 105744 / CCUG 35717)).